The chain runs to 108 residues: Trp operon repressor homolog (108 aa).

A DNA-binding region spans residues 59–82; sequence QRQISQLLGVGVATITRGSNELKS.

Belongs to the TrpR family. As to quaternary structure, homodimer.

It localises to the cytoplasm. This protein is an aporepressor. When complexed with L-tryptophan it binds the operator region of the trp operon and prevents the initiation of transcription. This Aliivibrio fischeri (strain ATCC 700601 / ES114) (Vibrio fischeri) protein is Trp operon repressor homolog.